The primary structure comprises 444 residues: MDDLAQLQSCSNELATAITSLASYAGSGNTQQAINNQSPFEPEEVQRAKGNILAVATKLRTLICGPTDFLQHLASQVSEILACLRWLGEFQILACIPLMGSAPIKDIADLTNVPESRLRRIIRLTATAGFLREPERDHVAHTPLSASFFSNPSLLDAAMFLSESAAPIALQMPQTAQVKEKSSSPPSNGTPCDLALPRGTEFHTACKRRPKLNRQWLAYLHHAAGLHTADDIAAVLTQLDWPKLTNGRDGSIIEYAISRVDHCHAQVGVSSWSTSIARRLAHFYPALHFTVQISDPAVAITQEEFHPRITATSRILGTRQTAAGAAVYILHLPFASSSPSAVMTELAVHLDVLRSRSGILLILTPRLLPQPGSLPDPEVEATARSRDLALGQMADEGEMEMLELLETIDTVRDSLGKLVVTSKLRSRNNLVVAVTVEYQRDLPS.

One can recognise an HTH iclR-type domain in the interval 74-144 (ASQVSEILAC…ERDHVAHTPL (71 aa)). The H-T-H motif DNA-binding region spans 104 to 123 (IKDIADLTNVPESRLRRIIR).

The protein localises to the nucleus. In terms of biological role, transcriptional coactivator; part of the gene cluster that mediates the biosynthesis of the tetrahydroxanthone dimer neosartorin, which exhibits antibacterial activity. The protein is Transcriptional coactivator nsrH of Aspergillus novofumigatus (strain IBT 16806).